The sequence spans 346 residues: MENFQKVEKIGEGTYGVVYKAKNKLTGEVVALKKIRLDTETEGVPSTAIREISLLKELNHPNIVKLLDVIHTENKLYLVFEFLHQDLKKFMDASALTGIPLPLIKSYLFQLLQGLAFCHSHRVLHRDLKPQNLLINAEGSIKLADFGLARAFGVPVRTYTHEVVTLWYRAPEILLGCKYYSTAVDIWSLGCIFAEMHLVCTQHHAKCCGEHRRNGRHSLCPLCSYLEVAASQGGGMTAVSAPHPVTRRALFPGDSEIDQLFRIFRTLGTPDEVVWPGVTSMPDYKPSFPKWARQDFSKVVPPLDEDGRSLLSQMLHYDPNKRISAKAALAHPFFQDVTKPVPHLRL.

At methionine 1 the chain carries N-acetylmethionine. The Protein kinase domain occupies 4–334; it reads FQKVEKIGEG…AKAALAHPFF (331 aa). The residue at position 6 (lysine 6) is an N6-acetyllysine. 10-18 is a binding site for ATP; the sequence is IGEGTYGVV. At threonine 14 the chain carries Phosphothreonine. Phosphotyrosine; by WEE1 is present on tyrosine 15. A Phosphotyrosine modification is found at tyrosine 19. ATP-binding positions include lysine 33, 81 to 83, and aspartate 86; that span reads EFL. Aspartate 127 functions as the Proton acceptor in the catalytic mechanism. ATP is bound by residues 129–132 and aspartate 145; that span reads KPQN. The Mg(2+) site is built by asparagine 132 and aspartate 145. Threonine 160 bears the Phosphothreonine; by CAK and CCRK mark. Phosphoserine is present on serine 218.

This sequence belongs to the protein kinase superfamily. CMGC Ser/Thr protein kinase family. CDC2/CDKX subfamily. As to quaternary structure, found in a complex with CABLES1, CCNA1 and CCNE1. Interacts with CABLES1. Interacts with UHRF2. Part of a complex consisting of UHRF2, CDK2 and CCNE1. Interacts with the Speedy/Ringo proteins SPDYA and SPDYC. Interaction with SPDYA promotes kinase activation via a conformation change that alleviates obstruction of the substrate-binding cleft by the T-loop. Found in a complex with both SPDYA and CDKN1B/KIP1. Binds to RB1 and CDK7. Binding to CDKN1A (p21) leads to CDK2/cyclin E inactivation at the G1-S phase DNA damage checkpoint, thereby arresting cells at the G1-S transition during DNA repair. Associated with PTPN6 and beta-catenin/CTNNB1. Interacts with CACUL1. May interact with CEP63. Interacts with ANKRD17. Interacts with CEBPA (when phosphorylated). Forms a ternary complex with CCNA2 and CDKN1B; CDKN1B inhibits the kinase activity of CDK2 through conformational rearrangements. Interacts with cyclins A, B1, B3, D, or E. Interacts with CDK2AP2. The cofactor is Mg(2+). In terms of processing, phosphorylated at Thr-160 by CDK7 in a CAK complex. Phosphorylation at Thr-160 promotes kinase activity, whereas phosphorylation at Tyr-15 by WEE1 reduces slightly kinase activity. Phosphorylated on Thr-14 and Tyr-15 during S and G2 phases before being dephosphorylated by CDC25A. Post-translationally, nitrosylated after treatment with nitric oxide (DETA-NO).

It localises to the cytoplasm. The protein localises to the cytoskeleton. Its subcellular location is the microtubule organizing center. The protein resides in the centrosome. It is found in the nucleus. It localises to the cajal body. The protein localises to the endosome. The enzyme catalyses L-seryl-[protein] + ATP = O-phospho-L-seryl-[protein] + ADP + H(+). It carries out the reaction L-threonyl-[protein] + ATP = O-phospho-L-threonyl-[protein] + ADP + H(+). Phosphorylation at Thr-14 or Tyr-15 inactivates the enzyme, while phosphorylation at Thr-160 activates it. Stimulated by MYC. Inactivated by CDKN1A (p21). Functionally, serine/threonine-protein kinase involved in the control of the cell cycle; essential for meiosis, but dispensable for mitosis. Phosphorylates CABLES1, CTNNB1, CDK2AP2, ERCC6, NBN, USP37, p53/TP53, NPM1, CDK7, RB1, BRCA2, MYC, NPAT, EZH2. Triggers duplication of centrosomes and DNA. Acts at the G1-S transition to promote the E2F transcriptional program and the initiation of DNA synthesis, and modulates G2 progression; controls the timing of entry into mitosis/meiosis by controlling the subsequent activation of cyclin B/CDK1 by phosphorylation, and coordinates the activation of cyclin B/CDK1 at the centrosome and in the nucleus. Crucial role in orchestrating a fine balance between cellular proliferation, cell death, and DNA repair in embryonic stem cells (ESCs). Activity of CDK2 is maximal during S phase and G2; activated by interaction with cyclin E during the early stages of DNA synthesis to permit G1-S transition, and subsequently activated by cyclin A2 (cyclin A1 in germ cells) during the late stages of DNA replication to drive the transition from S phase to mitosis, the G2 phase. EZH2 phosphorylation promotes H3K27me3 maintenance and epigenetic gene silencing. Cyclin E/CDK2 prevents oxidative stress-mediated Ras-induced senescence by phosphorylating MYC. Involved in G1-S phase DNA damage checkpoint that prevents cells with damaged DNA from initiating mitosis; regulates homologous recombination-dependent repair by phosphorylating BRCA2, this phosphorylation is low in S phase when recombination is active, but increases as cells progress towards mitosis. In response to DNA damage, double-strand break repair by homologous recombination a reduction of CDK2-mediated BRCA2 phosphorylation. Involved in regulation of telomere repair by mediating phosphorylation of NBN. Phosphorylation of RB1 disturbs its interaction with E2F1. NPM1 phosphorylation by cyclin E/CDK2 promotes its dissociation from unduplicated centrosomes, thus initiating centrosome duplication. Cyclin E/CDK2-mediated phosphorylation of NPAT at G1-S transition and until prophase stimulates the NPAT-mediated activation of histone gene transcription during S phase. Required for vitamin D-mediated growth inhibition by being itself inactivated. Involved in the nitric oxide- (NO) mediated signaling in a nitrosylation/activation-dependent manner. USP37 is activated by phosphorylation and thus triggers G1-S transition. CTNNB1 phosphorylation regulates insulin internalization. Phosphorylates FOXP3 and negatively regulates its transcriptional activity and protein stability. Phosphorylates ERCC6 which is essential for its chromatin remodeling activity at DNA double-strand breaks. Acts as a regulator of the phosphatidylinositol 3-kinase/protein kinase B signal transduction by mediating phosphorylation of the C-terminus of protein kinase B (PKB/AKT1 and PKB/AKT2), promoting its activation. The chain is Cyclin-dependent kinase 2 (Cdk2) from Mus musculus (Mouse).